The primary structure comprises 291 residues: Trimeric intracellular cation channel type B (291 aa).

The Lumenal segment spans residues 1 to 19; it reads MDSPWDELALAFSRTSMFP. Residues 20–33 form a helical membrane-spanning segment; it reads FFDIAHYLVSVMAV. Residues 34–50 lie on the Cytoplasmic side of the membrane; sequence KRQPGAAALAWKNPISS. Residues 51–70 form a helical membrane-spanning segment; the sequence is WFTAMLHCFGGGILSCLLLA. At 71–82 the chain is on the lumenal side; the sequence is EPPLKFLANHTN. The helical transmembrane segment at 83-99 threads the bilayer; the sequence is ILLASSIWYITFFCPHD. Over 100–104 the chain is Cytoplasmic; the sequence is LVSQG. A helical transmembrane segment spans residues 105 to 121; the sequence is YSYLPVQLLASGMKEVT. Positions 118 and 122 each coordinate a 1,2-diacyl-sn-glycero-3-phospho-(1D-myo-inositol-4,5-bisphosphate). Topologically, residues 122 to 139 are lumenal; that stretch reads RTWKIVGGVTHANSYYKN. The chain crosses the membrane as a helical span at residues 140–156; it reads GWIVMIAIGWARGAGGT. The Cytoplasmic segment spans residues 157 to 179; the sequence is IITNFERLVKGDWKPEGDEWLKM. The helical transmembrane segment at 180–195 threads the bilayer; the sequence is SYPAKVTLLGSVIFTF. The Lumenal portion of the chain corresponds to 196–207; sequence QHTQHLAISKHN. A helical membrane pass occupies residues 208 to 227; the sequence is LMFLYTIFIVATKITMMTTQ. Over 228 to 291 the chain is Cytoplasmic; that stretch reads TSTMTFAPFE…VKKKHTKKNE (64 aa). The interval 256–291 is disordered; it reads KKSEAKSPSNGVGSLASKPVDVASDNVKKKHTKKNE. Ser-262 is modified (phosphoserine).

Belongs to the TMEM38 family. In terms of assembly, homotrimer; conformation seems to be controled by binding to diacylglycerol (DAG).

The protein resides in the endoplasmic reticulum membrane. It catalyses the reaction K(+)(in) = K(+)(out). Its activity is regulated as follows. Channel activity is activated by increased cytosolic Ca(2+) levels and blocked by luminal high Ca(2+) levels. In terms of biological role, intracellular monovalent cation channel required for maintenance of rapid intracellular calcium release. Acts as a potassium counter-ion channel that functions in synchronization with calcium release from intracellular stores. Activated by increased cytosolic Ca(2+) levels. This chain is Trimeric intracellular cation channel type B, found in Homo sapiens (Human).